The primary structure comprises 499 residues: Pentatricopeptide repeat-containing protein At5g61800 (499 aa).

PPR repeat units lie at residues 78–113 (STFC…SVPP), 114–150 (DFHT…GLLS), 151–181 (DLFT…NPQR), 182–212 (DVVT…MPLR), 213–247 (DLVS…GLKP), 248–282 (DNVA…RLFI), 283–313 (DSFL…CSDK), 314–348 (TLFT…GIKP), 349–379 (DGVT…MRSL), and 385–419 (EMKH…GGNR). The tract at residues 424–499 (AWSGLLGGCR…KNVGFSKVLS (76 aa)) is type E motif.

This sequence belongs to the PPR family. PCMP-E subfamily.

This is Pentatricopeptide repeat-containing protein At5g61800 (PCMP-E8) from Arabidopsis thaliana (Mouse-ear cress).